Here is a 475-residue protein sequence, read N- to C-terminus: Ribulose bisphosphate carboxylase large chain (475 aa).

Residues asparagine 123 and threonine 173 each contribute to the substrate site. The active-site Proton acceptor is lysine 175. Residue lysine 177 coordinates substrate. The Mg(2+) site is built by lysine 201, aspartate 203, and glutamate 204. Lysine 201 is subject to N6-carboxylysine. The active-site Proton acceptor is the histidine 294. Residues arginine 295, histidine 327, and serine 379 each contribute to the substrate site.

The protein belongs to the RuBisCO large chain family. Type I subfamily. In terms of assembly, heterohexadecamer of 8 large chains and 8 small chains. Mg(2+) serves as cofactor.

It localises to the plastid. Its subcellular location is the cyanelle. It carries out the reaction 2 (2R)-3-phosphoglycerate + 2 H(+) = D-ribulose 1,5-bisphosphate + CO2 + H2O. The enzyme catalyses D-ribulose 1,5-bisphosphate + O2 = 2-phosphoglycolate + (2R)-3-phosphoglycerate + 2 H(+). In terms of biological role, ruBisCO catalyzes two reactions: the carboxylation of D-ribulose 1,5-bisphosphate, the primary event in carbon dioxide fixation, as well as the oxidative fragmentation of the pentose substrate in the photorespiration process. Both reactions occur simultaneously and in competition at the same active site. The sequence is that of Ribulose bisphosphate carboxylase large chain from Cyanophora paradoxa.